A 537-amino-acid chain; its full sequence is Chaperonin GroEL 2 (537 aa).

ATP is bound by residues 29–32 (TLGP), 86–90 (DGTTT), Gly413, 477–479 (NAA), and Asp493.

Belongs to the chaperonin (HSP60) family. Forms a cylinder of 14 subunits composed of two heptameric rings stacked back-to-back. Interacts with the co-chaperonin GroES.

It localises to the cytoplasm. It catalyses the reaction ATP + H2O + a folded polypeptide = ADP + phosphate + an unfolded polypeptide.. Its function is as follows. Together with its co-chaperonin GroES, plays an essential role in assisting protein folding. The GroEL-GroES system forms a nano-cage that allows encapsulation of the non-native substrate proteins and provides a physical environment optimized to promote and accelerate protein folding. The chain is Chaperonin GroEL 2 from Thermobifida fusca (strain YX).